The sequence spans 377 residues: Nitric oxide reductase FlRd-NAD(+) reductase (377 aa).

The protein belongs to the FAD-dependent oxidoreductase family. It depends on FAD as a cofactor.

The protein localises to the cytoplasm. The catalysed reaction is 2 reduced [nitric oxide reductase rubredoxin domain] + NAD(+) + H(+) = 2 oxidized [nitric oxide reductase rubredoxin domain] + NADH. It participates in nitrogen metabolism; nitric oxide reduction. Functionally, one of at least two accessory proteins for anaerobic nitric oxide (NO) reductase. Reduces the rubredoxin moiety of NO reductase. The chain is Nitric oxide reductase FlRd-NAD(+) reductase from Shigella dysenteriae serotype 1 (strain Sd197).